The sequence spans 478 residues: Proton-coupled amino acid transporter 2 (478 aa).

Composition is skewed to polar residues over residues 1-14 and 26-37; these read MSVT…QVAT and KLQSQDPSPANG. The segment at 1 to 46 is disordered; it reads MSVTKSARSPQVATPLNLDLPESAKKLQSQDPSPANGSSSESSKKT. Residues 1–53 lie on the Cytoplasmic side of the membrane; that stretch reads MSVTKSARSPQVATPLNLDLPESAKKLQSQDPSPANGSSSESSKKTKGITGFQ. A helical transmembrane segment spans residues 54 to 74; that stretch reads TLVHLVKGNMGTGILGLPLAV. Over 75–76 the chain is Extracellular; sequence KN. A helical membrane pass occupies residues 77–97; sequence AGILMGPLSLLVMGLIACHCM. The Cytoplasmic segment spans residues 98–143; that stretch reads HILVRCAQRFCHRLNKPFMDYGDTVMHGLAFSPNAWLQNHAHWGRR. Residues 144 to 164 form a helical membrane-spanning segment; it reads VVSFFLIVTQLGFCCVYIVFL. Over 165 to 192 the chain is Extracellular; the sequence is ADNLKQVVEAVNSTTISCHKNETVVLTP. The helical transmembrane segment at 193–213 threads the bilayer; the sequence is TMDSRLYMLSFLPVLGLLVFV. Topologically, residues 214 to 217 are cytoplasmic; the sequence is RNLR. The helical transmembrane segment at 218-238 threads the bilayer; sequence VLTIFSLLANISMLVSLVIIA. Topologically, residues 239–259 are extracellular; it reads QYIIQEIPDASQLPLVASWKT. A helical transmembrane segment spans residues 260 to 280; that stretch reads YPLFFGTAIFSFESIGVVLPL. Topologically, residues 281–292 are cytoplasmic; that stretch reads ENKMKDARGFPT. Residues 293–313 form a helical membrane-spanning segment; sequence ILSLGMSIITTLYIAIGALGY. Residues 314 to 340 are Extracellular-facing; it reads LRFGDDIKASITLNLPNCWLYQSVKLL. A helical transmembrane segment spans residues 341–361; it reads YVVGILCTYALQFYVPAEIII. Topologically, residues 362 to 374 are cytoplasmic; that stretch reads PLAVSQVSKRWAL. The chain crosses the membrane as a helical span at residues 375–395; sequence PVDLSIRLALVCLTCMLAILI. The Extracellular segment spans residues 396 to 399; the sequence is PRLD. Residues 400–420 traverse the membrane as a helical segment; that stretch reads LVLSLVGSVSSSALALIIPPL. Residues 421–441 are Cytoplasmic-facing; it reads LEVVTYYGEGISPLTVTKDAL. A helical transmembrane segment spans residues 442–462; that stretch reads ISILGFMGFVVGTYQALDELI. The Extracellular segment spans residues 463–478; sequence KSGNSPALSNSTMFIQ.

The protein belongs to the amino acid/polyamine transporter 2 family. As to expression, expressed in spinal cord, brain, testis, lung, heart, colon, spleen, kidney and muscle. Found in neuronal cell bodies in the anterior horn, in spinal cord brain stem, cerebellum, hippocampus, hypothalamus, rhinencephalon, cerebral cortex, and olfactory bulb in the brain. Also expressed in bone and fat tissues.

The protein localises to the cell membrane. It localises to the endoplasmic reticulum membrane. Its subcellular location is the recycling endosome membrane. It carries out the reaction glycine(in) + H(+)(in) = glycine(out) + H(+)(out). The enzyme catalyses L-alanine(in) + H(+)(in) = L-alanine(out) + H(+)(out). It catalyses the reaction D-alanine(in) + H(+)(in) = D-alanine(out) + H(+)(out). The catalysed reaction is L-proline(out) + H(+)(out) = L-proline(in) + H(+)(in). It carries out the reaction D-proline(out) + H(+)(out) = D-proline(in) + H(+)(in). The enzyme catalyses 4-hydroxy-L-proline(in) + H(+)(in) = 4-hydroxy-L-proline(out) + H(+)(out). It catalyses the reaction L-serine(in) + H(+)(in) = L-serine(out) + H(+)(out). The catalysed reaction is D-serine(out) + H(+)(out) = D-serine(in) + H(+)(in). It carries out the reaction beta-alanine(in) + H(+)(in) = beta-alanine(out) + H(+)(out). The enzyme catalyses 4-aminobutanoate(in) + H(+)(in) = 4-aminobutanoate(out) + H(+)(out). It catalyses the reaction sarcosine(in) + H(+)(in) = sarcosine(out) + H(+)(out). The catalysed reaction is N,N-dimethylglycine(in) + H(+)(in) = N,N-dimethylglycine(out) + H(+)(out). Electrogenic proton/amino acid symporter with a high selectivity for the small side chains amino acids glycine, alanine and proline, where both L- and D-enantiomers are transported. Extension of the backbone length, as in beta-alanine and 4-aminobutanoate or methylation of the amino group, as in sarcosine and N,N-dimethylglycine, are also tolerated but decrease transport efficiency. A free carboxyl group is preferred. The sequence is that of Proton-coupled amino acid transporter 2 from Mus musculus (Mouse).